The chain runs to 166 residues: Ubiquitin-fold modifier-conjugating enzyme 1 (166 aa).

Cys116 functions as the Glycyl thioester intermediate in the catalytic mechanism.

Belongs to the ubiquitin-conjugating enzyme family. UFC1 subfamily.

In terms of biological role, E2-like enzyme which forms an intermediate with UFM1 via a thioester linkage. This is Ubiquitin-fold modifier-conjugating enzyme 1 from Monosiga brevicollis (Choanoflagellate).